The sequence spans 120 residues: Large ribosomal subunit protein bL12 (120 aa).

It belongs to the bacterial ribosomal protein bL12 family. In terms of assembly, homodimer. Part of the ribosomal stalk of the 50S ribosomal subunit. Forms a multimeric L10(L12)X complex, where L10 forms an elongated spine to which 2 to 4 L12 dimers bind in a sequential fashion. Binds GTP-bound translation factors.

Forms part of the ribosomal stalk which helps the ribosome interact with GTP-bound translation factors. Is thus essential for accurate translation. The protein is Large ribosomal subunit protein bL12 of Aeromonas salmonicida (strain A449).